Reading from the N-terminus, the 223-residue chain is uncharacterized protein (223 aa).

7 helical membrane-spanning segments follow: residues 25-45 (TYFL…ATMA), 46-66 (IGIS…ILFF), 78-98 (LVWT…MLNF), 105-125 (GPIV…GLSA), 140-160 (FLFA…FVGS), 161-181 (TVAH…FILF), and 199-219 (ISMY…LGIM).

This sequence belongs to the BI1 family.

It is found in the cell membrane. This is an uncharacterized protein from Vibrio cholerae serotype O1 (strain ATCC 39315 / El Tor Inaba N16961).